The following is a 347-amino-acid chain: Serpentine receptor class beta-2 (347 aa).

A run of 7 helical transmembrane segments spans residues 27-47 (IAQL…YIFL), 62-82 (FLLV…AFLF), 108-128 (GNLS…GFSI), 146-166 (FLGP…LYHV), 194-214 (FWEL…FLLV), 246-266 (LIVS…TIFV), and 288-308 (ITVP…LSFM).

Belongs to the nematode receptor-like protein srb family.

The protein resides in the membrane. The chain is Serpentine receptor class beta-2 (srb-2) from Caenorhabditis elegans.